The primary structure comprises 582 residues: ATP-dependent lipid A-core flippase (582 aa).

A run of 6 helical transmembrane segments spans residues 23-43 (AAFIAAILCMIGYSAIDTLFL), 61-81 (ILLYGALFVPFIFILRGSLNV), 140-160 (AVLVLVKEGAFVAGLLGLMFY), 163-183 (WQLSLVFLVIGPLVAKVVGVV), 247-267 (AISTSVIQFIASLSLSMVLVI), and 273-293 (MLGELSAGAFTTLLTAMIMLL). An ABC transmembrane type-1 domain is found at 26–308 (IAAILCMIGY…LTNVNSDFQR (283 aa)). The ABC transporter domain maps to 340-576 (IVFDDVTFSY…EGAYFQLHNL (237 aa)). 374–381 (GRSGSGKS) contributes to the ATP binding site.

This sequence belongs to the ABC transporter superfamily. Lipid exporter (TC 3.A.1.106) family. Homodimer.

It localises to the cell inner membrane. It carries out the reaction ATP + H2O + lipid A-core oligosaccharideSide 1 = ADP + phosphate + lipid A-core oligosaccharideSide 2.. Functionally, involved in lipopolysaccharide (LPS) biosynthesis. Translocates lipid A-core from the inner to the outer leaflet of the inner membrane. Transmembrane domains (TMD) form a pore in the inner membrane and the ATP-binding domain (NBD) is responsible for energy generation. This chain is ATP-dependent lipid A-core flippase, found in Idiomarina loihiensis (strain ATCC BAA-735 / DSM 15497 / L2-TR).